Here is a 192-residue protein sequence, read N- to C-terminus: Molybdenum cofactor cytidylyltransferase (192 aa).

D101 provides a ligand contact to Mg(2+).

Monomer. Interacts with the Moco-binding chaperone PaoD. Requires Mg(2+) as cofactor. It depends on Mn(2+) as a cofactor.

It catalyses the reaction Mo-molybdopterin + CTP + H(+) = Mo-molybdopterin cytosine dinucleotide + diphosphate. Transfers a CMP moiety from CTP to Mo-molybdopterin (Mo-MPT) cofactor (Moco or molybdenum cofactor) to form Mo-molybdopterin cytosine dinucleotide (Mo-MCD) cofactor. Is specific for CTP; other nucleotides such as ATP and GTP cannot be utilized. Is also able to convert MPT to MCD in the absence of molybdate, however, with only one catalytic turnover. The polypeptide is Molybdenum cofactor cytidylyltransferase (mocA) (Escherichia coli (strain K12)).